Consider the following 208-residue polypeptide: Uracil phosphoribosyltransferase (208 aa).

5-phospho-alpha-D-ribose 1-diphosphate contacts are provided by residues Arg-78, Arg-103, and 130–138; that span reads DPMLATGGT. Uracil-binding positions include Ile-193 and 198 to 200; that span reads GDA. Asp-199 is a binding site for 5-phospho-alpha-D-ribose 1-diphosphate.

This sequence belongs to the UPRTase family. Requires Mg(2+) as cofactor.

The catalysed reaction is UMP + diphosphate = 5-phospho-alpha-D-ribose 1-diphosphate + uracil. Its pathway is pyrimidine metabolism; UMP biosynthesis via salvage pathway; UMP from uracil: step 1/1. With respect to regulation, allosterically activated by GTP. In terms of biological role, catalyzes the conversion of uracil and 5-phospho-alpha-D-ribose 1-diphosphate (PRPP) to UMP and diphosphate. In Solidesulfovibrio magneticus (strain ATCC 700980 / DSM 13731 / RS-1) (Desulfovibrio magneticus), this protein is Uracil phosphoribosyltransferase.